We begin with the raw amino-acid sequence, 369 residues long: Putative 2-aminoethylphosphonate import ATP-binding protein PhnT (369 aa).

The region spanning 19 to 250 (IVLDSLRVAY…PPNRFAAEFL (232 aa)) is the ABC transporter domain. 51–58 (GPSGSGKT) contacts ATP.

The protein belongs to the ABC transporter superfamily. 2-aminoethylphosphonate importer (TC 3.A.1.11.5) family.

The protein resides in the cell inner membrane. Its function is as follows. Probably part of the PhnSTUV complex (TC 3.A.1.11.5) involved in 2-aminoethylphosphonate import. Probably responsible for energy coupling to the transport system. This is Putative 2-aminoethylphosphonate import ATP-binding protein PhnT (phnT) from Salmonella typhimurium (strain LT2 / SGSC1412 / ATCC 700720).